The chain runs to 392 residues: Bone morphogenetic protein 15 (392 aa).

Positions 1 to 25 are cleaved as a signal peptide; it reads MALLTILRILLWGVVLFMEQRVQMA. The propeptide occupies 26–267; that stretch reads KPGWPSTALL…ESSFLMRSVR (242 aa). N-linked (GlcNAc...) asparagine glycans are attached at residues asparagine 85, asparagine 213, asparagine 236, asparagine 349, and asparagine 373. 3 disulfides stabilise this stretch: cysteine 291/cysteine 357, cysteine 320/cysteine 389, and cysteine 324/cysteine 391.

It belongs to the TGF-beta family. Homodimer. But, in contrast to other members of this family, cannot be disulfide-linked. As to expression, ovary specific.

The protein localises to the secreted. Functionally, may be involved in follicular development. Oocyte-specific growth/differentiation factor that stimulates folliculogenesis and granulosa cell (GC) growth. The polypeptide is Bone morphogenetic protein 15 (Bmp15) (Mus musculus (Mouse)).